The following is a 650-amino-acid chain: SPARC-like protein 1 (650 aa).

The N-terminal stretch at 1–16 is a signal peptide; that stretch reads MKAVLLLLCALGTAVA. The disordered stretch occupies residues 51-352; the sequence is TADIENHPSD…HGAGDDYFIP (302 aa). The segment covering 54-64 has biased composition (basic and acidic residues); that stretch reads IENHPSDKAEK. Ser70, Ser78, and Ser86 each carry phosphoserine. The segment covering 75–85 has biased composition (basic and acidic residues); it reads HEQSTEQDKTY. Positions 91–101 are enriched in acidic residues; sequence LKDEEDGDGDL. 2 stretches are compositionally biased toward polar residues: residues 116 to 126 and 135 to 148; these read EGTSEPQQKSL and TVST…QRAN. The N-linked (GlcNAc...) asparagine glycan is linked to Asn148. Phosphoserine is present on residues Ser155 and Ser163. Residues 157–174 show a composition bias toward polar residues; the sequence is EQPVSDSHQQPNESSKQT. Asn168 is a glycosylation site (N-linked (GlcNAc...) asparagine). Positions 189–210 are enriched in acidic residues; the sequence is IPNEEEEEEEDEEEEEEEEPED. Ser272 carries the post-translational modification Phosphoserine. Positions 277–299 are enriched in basic and acidic residues; sequence EDKAAGSKEHIPHTEQQDQEGKA. Phosphoserine is present on Ser353. The disordered stretch occupies residues 375-415; that stretch reads EETTTGESENRREAADNQEAKKAESSPNAEPSDEGNSREHS. Basic and acidic residues predominate over residues 382–398; sequence SENRREAADNQEAKKAE. Ser406 is subject to Phosphoserine. The region spanning 418 to 440 is the Follistatin-like domain; that stretch reads SCTNFQCKRGHICKTDPQGKPHC. 7 cysteine pairs are disulfide-bonded: Cys419–Cys430, Cys424–Cys440, Cys442–Cys476, Cys448–Cys469, Cys458–Cys495, Cys501–Cys612, and Cys620–Cys636. In terms of domain architecture, Kazal-like spans 436 to 497; sequence GKPHCVCQDP…QLDYFGACKS (62 aa). N-linked (GlcNAc...) asparagine glycosylation occurs at Asn462. The EF-hand domain occupies 608 to 643; it reads PMEHCITRFFEECDPNKDKHITLKEWGHCFGIKEED. Asp621, Asn623, Asp625, His627, and Glu632 together coordinate Ca(2+).

This sequence belongs to the SPARC family. As to expression, highest expression in brain. Moderate levels in heart, adrenal gland, epididymis and lung. Low levels in kidney, eye, liver, spleen, submandibular gland and testis.

Its subcellular location is the secreted. The protein resides in the extracellular space. It is found in the extracellular matrix. This is SPARC-like protein 1 (Sparcl1) from Mus musculus (Mouse).